A 744-amino-acid polypeptide reads, in one-letter code: Cell surface receptor daf-4 (744 aa).

An N-terminal signal peptide occupies residues 1-31; that stretch reads MNQKGTVRLKALVLICLPLFLIATPVPVAVT. At 48–253 the chain is on the extracellular side; it reads WANTLVSKVA…IALLILAYVG (206 aa). Residues Asn60, Asn134, and Asn165 are each glycosylated (N-linked (GlcNAc...) asparagine). The helical transmembrane segment at 254–274 threads the bilayer; sequence WKFQQNKKEEIKKQQKIKFDM. Residues 275–744 lie on the Cytoplasmic side of the membrane; it reads EKTDALEAGN…PSGTFGTFTT (470 aa). A Protein kinase domain is found at 306–603; it reads ITDFQLISKG…FARVWNHIMS (298 aa). ATP contacts are provided by residues 312–320 and Lys338; that span reads ISKGRFGKV. Asp440 serves as the catalytic Proton acceptor. Disordered stretches follow at residues 605 to 686 and 724 to 744; these read PDSS…PEPE and AGADTRASTPTPSGTFGTFTT. Over residues 620-639 the composition is skewed to basic and acidic residues; sequence RGVDDVEQSEKPEGIEEMQH. A compositionally biased stretch (low complexity) spans 731-744; it reads STPTPSGTFGTFTT.

The protein belongs to the protein kinase superfamily. TKL Ser/Thr protein kinase family. TGFB receptor subfamily. In terms of assembly, may interact with daf-1 to regulate dauer larva development. Interacts with sma-10. Pharynx, intestine, hypodermis and body wall muscles in L1 through to adult stages. Also expressed in head neurons, ventral cord and tail neurons. Subset of head neurons show coexpression with daf-1 when dauer/nondauer decision is made.

The protein resides in the cell membrane. It carries out the reaction L-threonyl-[receptor-protein] + ATP = O-phospho-L-threonyl-[receptor-protein] + ADP + H(+). It catalyses the reaction L-seryl-[receptor-protein] + ATP = O-phospho-L-seryl-[receptor-protein] + ADP + H(+). Its function is as follows. Involved in a TGF-beta pathway. May be a receptor for TGF-beta-like ligand daf-7. Controls the decision of whether or not larvae enter a developmentally arrested state, known as dauer, in response to environmental conditions. Regulates body size and male tail patterning. Involved in regulating entry into quiescence triggered by satiety. Involved in sensitivity to CO2 levels. In Caenorhabditis elegans, this protein is Cell surface receptor daf-4.